A 208-amino-acid polypeptide reads, in one-letter code: Ribosomal RNA large subunit methyltransferase E (208 aa).

Residues Gly63, Trp65, Asp83, Asp99, and Asp124 each coordinate S-adenosyl-L-methionine. Catalysis depends on Lys164, which acts as the Proton acceptor.

The protein belongs to the class I-like SAM-binding methyltransferase superfamily. RNA methyltransferase RlmE family.

It is found in the cytoplasm. The catalysed reaction is uridine(2552) in 23S rRNA + S-adenosyl-L-methionine = 2'-O-methyluridine(2552) in 23S rRNA + S-adenosyl-L-homocysteine + H(+). Its function is as follows. Specifically methylates the uridine in position 2552 of 23S rRNA at the 2'-O position of the ribose in the fully assembled 50S ribosomal subunit. In Salmonella arizonae (strain ATCC BAA-731 / CDC346-86 / RSK2980), this protein is Ribosomal RNA large subunit methyltransferase E.